The chain runs to 56 residues: Small ribosomal subunit protein uS14 (56 aa).

Cys-21, Cys-24, Cys-39, and Cys-42 together coordinate Zn(2+).

This sequence belongs to the universal ribosomal protein uS14 family. Zn(2+) is required as a cofactor.

The chain is Small ribosomal subunit protein uS14 (RPS29) from Eremothecium gossypii (strain ATCC 10895 / CBS 109.51 / FGSC 9923 / NRRL Y-1056) (Yeast).